Reading from the N-terminus, the 373-residue chain is tRNA-specific 2-thiouridylase MnmA (373 aa).

Residues Gly-12–Ser-19 and Met-38 contribute to the ATP site. Residues Asn-98 to Asp-100 are interaction with target base in tRNA. Cys-103 (nucleophile) is an active-site residue. An intrachain disulfide couples Cys-103 to Cys-200. Gly-128 provides a ligand contact to ATP. Residues Lys-150 to Gln-152 are interaction with tRNA. The active-site Cysteine persulfide intermediate is Cys-200. An interaction with tRNA region spans residues Arg-312 to Tyr-313.

It belongs to the MnmA/TRMU family. Interacts with TusE.

Its subcellular location is the cytoplasm. It catalyses the reaction S-sulfanyl-L-cysteinyl-[protein] + uridine(34) in tRNA + AH2 + ATP = 2-thiouridine(34) in tRNA + L-cysteinyl-[protein] + A + AMP + diphosphate + H(+). Its function is as follows. Catalyzes the 2-thiolation of uridine at the wobble position (U34) of tRNA(Lys), tRNA(Glu) and tRNA(Gln), leading to the formation of s(2)U34, the first step of tRNA-mnm(5)s(2)U34 synthesis. Sulfur is provided by IscS, via a sulfur-relay system. Binds ATP and its substrate tRNAs. In Yersinia enterocolitica serotype O:8 / biotype 1B (strain NCTC 13174 / 8081), this protein is tRNA-specific 2-thiouridylase MnmA.